The following is a 303-amino-acid chain: Probable cell division protein WhiA (303 aa).

Residues 272–303 (SLQQIADSLDFAITKSGVNHRLRKINKLAEDL) constitute a DNA-binding region (H-T-H motif).

Belongs to the WhiA family.

In terms of biological role, involved in cell division and chromosome segregation. The chain is Probable cell division protein WhiA from Streptococcus equi subsp. zooepidemicus (strain MGCS10565).